The chain runs to 201 residues: Holliday junction branch migration complex subunit RuvA (201 aa).

The tract at residues 1–63 is domain I; the sequence is MYDYIKGTVT…EDNISLFGFQ (63 aa). Residues 64–142 are domain II; sequence TTEERYLFKK…DVVASEIVYV (79 aa). Residues 143–153 are flexible linker; that stretch reads APENDMVAGLS. The domain III stretch occupies residues 153 to 201; that stretch reads SPQLEEAVLALEALGYSTRELKKVIPKLSKEEDLTSDAYIKLALQLMTK.

This sequence belongs to the RuvA family. Homotetramer. Forms an RuvA(8)-RuvB(12)-Holliday junction (HJ) complex. HJ DNA is sandwiched between 2 RuvA tetramers; dsDNA enters through RuvA and exits via RuvB. An RuvB hexamer assembles on each DNA strand where it exits the tetramer. Each RuvB hexamer is contacted by two RuvA subunits (via domain III) on 2 adjacent RuvB subunits; this complex drives branch migration. In the full resolvosome a probable DNA-RuvA(4)-RuvB(12)-RuvC(2) complex forms which resolves the HJ.

It localises to the cytoplasm. Functionally, the RuvA-RuvB-RuvC complex processes Holliday junction (HJ) DNA during genetic recombination and DNA repair, while the RuvA-RuvB complex plays an important role in the rescue of blocked DNA replication forks via replication fork reversal (RFR). RuvA specifically binds to HJ cruciform DNA, conferring on it an open structure. The RuvB hexamer acts as an ATP-dependent pump, pulling dsDNA into and through the RuvAB complex. HJ branch migration allows RuvC to scan DNA until it finds its consensus sequence, where it cleaves and resolves the cruciform DNA. The protein is Holliday junction branch migration complex subunit RuvA of Listeria monocytogenes serotype 4b (strain CLIP80459).